A 275-amino-acid polypeptide reads, in one-letter code: uncharacterized protein (275 aa).

2 disordered regions span residues 1–25 and 185–275; these read MIGG…DQEQ and QRGE…RHHM. Positions 228 to 239 are enriched in basic and acidic residues; sequence KPGDGEENAKDD.

This is an uncharacterized protein from Neurospora crassa (strain ATCC 24698 / 74-OR23-1A / CBS 708.71 / DSM 1257 / FGSC 987).